The primary structure comprises 910 residues: Leucine--tRNA ligase (910 aa).

A 'HIGH' region motif is present at residues 42–52; the sequence is PYPSGKLHMGH. Positions 658 to 662 match the 'KMSKS' region motif; it reads TMSKS. Lysine 661 contributes to the ATP binding site.

It belongs to the class-I aminoacyl-tRNA synthetase family.

The protein localises to the cytoplasm. It carries out the reaction tRNA(Leu) + L-leucine + ATP = L-leucyl-tRNA(Leu) + AMP + diphosphate. This chain is Leucine--tRNA ligase, found in Acidovorax ebreus (strain TPSY) (Diaphorobacter sp. (strain TPSY)).